The following is a 147-amino-acid chain: MVHWTAEEKQIITGLWGKVNVADCGAEALARLLIVYPWTQRFFSSFGNLSSPTAILGNPMVRAHGKKVLTSFGDAVKNLDNIKNTFAQLSELHCDKLHVDPENFRLLGDILIVVLAAHFSKEFTPECQAAWQKLVRVVAHALARKYH.

The region spanning 3 to 147 (HWTAEEKQII…VAHALARKYH (145 aa)) is the Globin domain. The heme b site is built by histidine 64 and histidine 93.

Heterotetramer of two alpha (or alpha-D) and two beta chains. Red blood cells.

Functionally, involved in oxygen transport from the lung to the various peripheral tissues. The beta chain is a component of adult hemoglobin A and D. The protein is Hemoglobin subunit beta of Aythya fuligula (Tufted duck).